The following is a 408-amino-acid chain: Phosphoglycerate kinase (408 aa).

Residues 22–24, arginine 39, 60–63, arginine 117, and arginine 157 contribute to the substrate site; these read DIN and HQSR. ATP-binding positions include glutamate 332 and 358 to 361; that span reads GGHT.

This sequence belongs to the phosphoglycerate kinase family. Monomer.

Its subcellular location is the cytoplasm. The enzyme catalyses (2R)-3-phosphoglycerate + ATP = (2R)-3-phospho-glyceroyl phosphate + ADP. It participates in carbohydrate degradation; glycolysis; pyruvate from D-glyceraldehyde 3-phosphate: step 2/5. The sequence is that of Phosphoglycerate kinase (pgk) from Thermoplasma acidophilum (strain ATCC 25905 / DSM 1728 / JCM 9062 / NBRC 15155 / AMRC-C165).